We begin with the raw amino-acid sequence, 366 residues long: Acetylserotonin O-methyltransferase 2 (366 aa).

Residues Gly-209, Asp-232, Asp-253, and Lys-267 each contribute to the S-adenosyl-L-homocysteine site. His-271 serves as the catalytic Proton acceptor. Active-site residues include Glu-302 and Glu-332.

The protein belongs to the class I-like SAM-binding methyltransferase superfamily. Cation-independent O-methyltransferase family. In terms of assembly, homodimer. Expressed in roots, leaves, stems and flowers.

It localises to the cytoplasm. The enzyme catalyses N-acetylserotonin + S-adenosyl-L-methionine = melatonin + S-adenosyl-L-homocysteine + H(+). It participates in aromatic compound metabolism; melatonin biosynthesis; melatonin from serotonin: step 1/2. In terms of biological role, methyltransferase which catalyzes the transfer of a methyl group onto N-acetylserotonin, producing melatonin (N-acetyl-5-methoxytryptamine). The chain is Acetylserotonin O-methyltransferase 2 from Oryza sativa subsp. japonica (Rice).